Reading from the N-terminus, the 512-residue chain is Threonine synthase (512 aa).

At Lys121 the chain carries N6-(pyridoxal phosphate)lysine. Residues Gly273, Asn274, Phe275, Asp277, and Thr445 each coordinate pyridoxal 5'-phosphate.

Belongs to the threonine synthase family. It depends on pyridoxal 5'-phosphate as a cofactor.

It catalyses the reaction O-phospho-L-homoserine + H2O = L-threonine + phosphate. The protein operates within amino-acid biosynthesis; L-threonine biosynthesis; L-threonine from L-aspartate: step 5/5. Its function is as follows. Catalyzes the gamma-elimination of phosphate from L-phosphohomoserine and the beta-addition of water to produce L-threonine. This chain is Threonine synthase (THR4), found in Eremothecium gossypii (strain ATCC 10895 / CBS 109.51 / FGSC 9923 / NRRL Y-1056) (Yeast).